Here is a 318-residue protein sequence, read N- to C-terminus: ATP-dependent (S)-NAD(P)H-hydrate dehydratase (318 aa).

One can recognise a YjeF C-terminal domain in the interval 3 to 313 (AREVFKRVIP…KEIGPAFDSL (311 aa)). Residues G119 and 172-178 (NTNEFKR) each bind (6S)-NADPHX. ATP is bound by residues 210-214 (KGSKD) and 229-238 (TSLRRCGGQG). D239 serves as a coordination point for (6S)-NADPHX.

This sequence belongs to the NnrD/CARKD family. The cofactor is Mg(2+).

The protein localises to the cytoplasm. It carries out the reaction (6S)-NADHX + ATP = ADP + phosphate + NADH + H(+). The enzyme catalyses (6S)-NADPHX + ATP = ADP + phosphate + NADPH + H(+). In terms of biological role, catalyzes the dehydration of the S-form of NAD(P)HX at the expense of ATP, which is converted to ADP. Together with NAD(P)HX epimerase, which catalyzes the epimerization of the S- and R-forms, the enzyme allows the repair of both epimers of NAD(P)HX, a damaged form of NAD(P)H that is a result of enzymatic or heat-dependent hydration. This Batrachochytrium dendrobatidis (strain JAM81 / FGSC 10211) (Frog chytrid fungus) protein is ATP-dependent (S)-NAD(P)H-hydrate dehydratase.